Here is a 197-residue protein sequence, read N- to C-terminus: HTH-type transcriptional regulator BetI (197 aa).

Positions 8-68 (PIRRQQLIEA…ATMRYLMNAL (61 aa)) constitute an HTH tetR-type domain. Positions 31 to 50 (SIALIARLAGVSNGIISHYF) form a DNA-binding region, H-T-H motif.

The protein operates within amine and polyamine biosynthesis; betaine biosynthesis via choline pathway [regulation]. Its function is as follows. Repressor involved in the biosynthesis of the osmoprotectant glycine betaine. It represses transcription of the choline transporter BetT and the genes of BetAB involved in the synthesis of glycine betaine. The protein is HTH-type transcriptional regulator BetI of Pseudomonas fluorescens (strain SBW25).